Here is a 284-residue protein sequence, read N- to C-terminus: Kynurenine formamidase avaC (284 aa).

The HGGXW signature appears at 47-51 (HGGGW). The active-site Nucleophile is the Ser130.

Belongs to the kynurenine formamidase family.

It carries out the reaction N-formyl-L-kynurenine + H2O = L-kynurenine + formate + H(+). Its pathway is secondary metabolite metabolism. Functionally, kynurenine formamidase; part of the cluster that mediates the biosynthesis of a highly modified cyclo-arginine-tryptophan dipeptide (cRW). Within the pathway, avaC catalyzes the deformylation of the cyclo-Arg-formylkynurenine iketopiperazine (DKP), produced by the FAD-dependent monooxygenase avaB. The first step of the pathway is perfornmed by the arginine-containing cyclodipeptide synthase (RCPDS) avaA that acts as the scaffold-generating enzyme and is responsible for formation of the cyclo-Arg-Trp (cRW) diketopiperazine. AvaB then acts as a multifunctional flavoenzyme that is responsible for generating the cyclo-Arg-formylkynurenine DKP, which can be deformylated by avaC. AvaB then further catalyzes an additional N-oxidation followed by cyclization and dehydration. The next step is an N-acetylation of the guanidine group catalyzed by the arginine N-acetyltransferase avaD. The roles of the additional enzymes identified within the ava cluster still have to be determined. In Aspergillus versicolor, this protein is Kynurenine formamidase avaC.